The following is a 341-amino-acid chain: tRNA dimethylallyltransferase (341 aa).

15–22 contacts ATP; the sequence is GPTAAGKT. A substrate-binding site is contributed by 17 to 22; it reads TAAGKT. 4 interaction with substrate tRNA regions span residues 44 to 47, 168 to 172, 253 to 258, and 302 to 309; these read DSAL, QRIQR, RCVGYR, and KRQITWLR.

This sequence belongs to the IPP transferase family. As to quaternary structure, monomer. Requires Mg(2+) as cofactor.

The catalysed reaction is adenosine(37) in tRNA + dimethylallyl diphosphate = N(6)-dimethylallyladenosine(37) in tRNA + diphosphate. Catalyzes the transfer of a dimethylallyl group onto the adenine at position 37 in tRNAs that read codons beginning with uridine, leading to the formation of N6-(dimethylallyl)adenosine (i(6)A). The chain is tRNA dimethylallyltransferase from Verminephrobacter eiseniae (strain EF01-2).